The sequence spans 1025 residues: MATAFWLLLFLLGSLHVLTAAQNSSQSEWPIHDNGLSKVVQWDHYSFYINGQRIFLFSGEFHYWRIPVPALWRDILEKIKAIGFTGFAFYSSWAYHAPNNQTVDFSTGARDITPIYDLAKELGMYIIVRPGPYVNAEASAGGFPLWLTTGAYGSTRNDDPRYTAAWEPYFAEVSEITSKYQVTDGHYTLCYQIENEYGQQWIGDPRDRNPNQTAIAYMELLQASARENGITVPLTGNDPNMNTKSWGSDWSDAGGNLDTVGLDSYPSCWSCDVSVCTGTNGEYVPYKVLDYYDYFQEVQPTMPFFMPEFQGGSYNPWDGPEGGCTEDTGADFANLFYRWNIGQRVSAMSLYMMFGGTNWGGIAAPVTASSYDYSAPISEDRSIGSKYYETKLLALFTRCAKDLTMTDRLGNGTQYTDNEAVIASELRNPDTNAAFYVTTHLDTTVGTDESFKLHVNTSKGALTIPRHGGTIRLNGHHSKIIVTDFNFGSETLLYSTAEVLTYAVFDRKPTLVLWVPTGESGEFAIKGAKSGSVAKCSGCSNIKFHRDSGSLTVAFTQGEGISVLQLDNGVRVVLLDRQKAYTFWAPALTDNPLVPEGESVLVSGPYLVRTARLARSTLTLRGDSKGETLEIFAPRKIKKVTWNGKAVEATRTSYGSLKAILAKPPSVELPTLNGWKYSDSLPERFPTYDDSGAAWVEIDANHMTTPNPNKPATLPVLYADEYGFHNGVRLWRGYFNSSASGVYLNIQGGAAFGWSAWLNGHFLGSHLGSASIQQANGTLDFPANTLNTEGTPNVLLVVHDDTGHDQTTGVLNPRGILEARLLSEASDNNDDDSPGFTHWRVAGTAGGESDLDPVRGVYNEDGLYAERVGWHLPGFDDSKWATVNGTSLSFTGATVRFFRTVIPPLSIPENTDVSISFVFSTPNVNNTSAGNTSAFRAQLFVNGYQYGRYNPYVGNQVVYPVPPGILDYNGENTIGVAVWAQTEAGARLNLDWRVNYVLGSSLDAGRLDLSFVAIAYVYIFECLQL.

The N-terminal stretch at 1–21 is a signal peptide; the sequence is MATAFWLLLFLLGSLHVLTAA. An N-linked (GlcNAc...) asparagine glycan is attached at Asn23. Tyr90 contacts substrate. A glycan (N-linked (GlcNAc...) asparagine) is linked at Asn100. The substrate site is built by Asn135, Ala136, Glu137, and Asn195. The Proton donor role is filled by Glu196. Asn211 is a glycosylation site (N-linked (GlcNAc...) asparagine). Tyr265 contacts substrate. Cysteines 271 and 324 form a disulfide. Glu308 functions as the Nucleophile in the catalytic mechanism. Substrate is bound at residue Tyr373. N-linked (GlcNAc...) asparagine glycans are attached at residues Asn411, Asn456, Asn736, Asn776, Asn884, Asn925, and Asn926.

Belongs to the glycosyl hydrolase 35 family.

The protein localises to the secreted. It carries out the reaction Hydrolysis of terminal non-reducing beta-D-galactose residues in beta-D-galactosides.. In terms of biological role, cleaves beta-linked terminal galactosyl residues from gangliosides, glycoproteins, and glycosaminoglycans. The polypeptide is Probable beta-galactosidase B (lacB) (Emericella nidulans (strain FGSC A4 / ATCC 38163 / CBS 112.46 / NRRL 194 / M139) (Aspergillus nidulans)).